The following is a 184-amino-acid chain: Probable gluconokinase (184 aa).

11–18 contributes to the ATP binding site; sequence GVSGSGKS.

The protein belongs to the gluconokinase GntK/GntV family.

It catalyses the reaction D-gluconate + ATP = 6-phospho-D-gluconate + ADP + H(+). The protein operates within carbohydrate acid metabolism; D-gluconate degradation. This is Probable gluconokinase (Idnk) from Mus musculus (Mouse).